The primary structure comprises 397 residues: Acetate kinase 2 (397 aa).

N8 provides a ligand contact to Mg(2+). Residue K15 coordinates ATP. R89 provides a ligand contact to substrate. D146 (proton donor/acceptor) is an active-site residue. Residues 206 to 210 (HLGNG), 281 to 283 (DLR), and 329 to 333 (GIGEN) contribute to the ATP site. Position 382 (E382) interacts with Mg(2+).

It belongs to the acetokinase family. As to quaternary structure, homodimer. The cofactor is Mg(2+). It depends on Mn(2+) as a cofactor.

It is found in the cytoplasm. The catalysed reaction is acetate + ATP = acetyl phosphate + ADP. Its pathway is metabolic intermediate biosynthesis; acetyl-CoA biosynthesis; acetyl-CoA from acetate: step 1/2. Its function is as follows. Catalyzes the formation of acetyl phosphate from acetate and ATP. Can also catalyze the reverse reaction. This is Acetate kinase 2 from Listeria monocytogenes serotype 4b (strain F2365).